The chain runs to 372 residues: Chaperone protein DnaJ (372 aa).

Positions 5-70 (DYYEVLGVAK…DKRAAYDQFG (66 aa)) constitute a J domain. Residues 133–211 (GTETKIRIPT…CHGEGRVKKH (79 aa)) form a CR-type zinc finger. The Zn(2+) site is built by Cys-146, Cys-149, Cys-163, Cys-166, Cys-185, Cys-188, Cys-199, and Cys-202. 4 CXXCXGXG motif repeats span residues 146-153 (CGTCHGSG), 163-170 (CSACGGHG), 185-192 (CPRCGGTG), and 199-206 (CPSCHGEG).

The protein belongs to the DnaJ family. In terms of assembly, homodimer. Zn(2+) is required as a cofactor.

It localises to the cytoplasm. Functionally, participates actively in the response to hyperosmotic and heat shock by preventing the aggregation of stress-denatured proteins and by disaggregating proteins, also in an autonomous, DnaK-independent fashion. Unfolded proteins bind initially to DnaJ; upon interaction with the DnaJ-bound protein, DnaK hydrolyzes its bound ATP, resulting in the formation of a stable complex. GrpE releases ADP from DnaK; ATP binding to DnaK triggers the release of the substrate protein, thus completing the reaction cycle. Several rounds of ATP-dependent interactions between DnaJ, DnaK and GrpE are required for fully efficient folding. Also involved, together with DnaK and GrpE, in the DNA replication of plasmids through activation of initiation proteins. This is Chaperone protein DnaJ from Thiobacillus denitrificans (strain ATCC 25259 / T1).